The primary structure comprises 748 residues: Catalase-peroxidase (748 aa).

A cross-link (tryptophyl-tyrosyl-methioninium (Trp-Tyr) (with M-264)) is located at residues 92–238 (WHSAGTYRIG…LAAVQMGLIY (147 aa)). Histidine 93 functions as the Proton acceptor in the catalytic mechanism. The segment at residues 238–264 (YVNPEGPDGNPDPIASARDIRDTFARM) is a cross-link (tryptophyl-tyrosyl-methioninium (Tyr-Met) (with W-92)). Histidine 279 is a heme b binding site.

This sequence belongs to the peroxidase family. Peroxidase/catalase subfamily. Homodimer or homotetramer. It depends on heme b as a cofactor. Formation of the three residue Trp-Tyr-Met cross-link is important for the catalase, but not the peroxidase activity of the enzyme.

The enzyme catalyses H2O2 + AH2 = A + 2 H2O. It carries out the reaction 2 H2O2 = O2 + 2 H2O. Functionally, bifunctional enzyme with both catalase and broad-spectrum peroxidase activity. The polypeptide is Catalase-peroxidase (Xanthomonas euvesicatoria pv. vesicatoria (strain 85-10) (Xanthomonas campestris pv. vesicatoria)).